The chain runs to 176 residues: Deoxyuridine 5'-triphosphate nucleotidohydrolase (176 aa).

Substrate contacts are provided by residues 67–69, N80, 84–86, and K94; these read RSG and TVD. A disordered region spans residues 141 to 176; sequence GGFGSTGGHASVDGAEGGITHGGNSYASVVSDREGQ.

Belongs to the dUTPase family. The cofactor is Mg(2+).

It catalyses the reaction dUTP + H2O = dUMP + diphosphate + H(+). It functions in the pathway pyrimidine metabolism; dUMP biosynthesis; dUMP from dCTP (dUTP route): step 2/2. This enzyme is involved in nucleotide metabolism: it produces dUMP, the immediate precursor of thymidine nucleotides and it decreases the intracellular concentration of dUTP so that uracil cannot be incorporated into DNA. In Streptomyces griseus subsp. griseus (strain JCM 4626 / CBS 651.72 / NBRC 13350 / KCC S-0626 / ISP 5235), this protein is Deoxyuridine 5'-triphosphate nucleotidohydrolase.